The following is a 953-amino-acid chain: Valine--tRNA ligase (953 aa).

The 'HIGH' region motif lies at P42 to H52. The 'KMSKS' region motif lies at K554–S558. K557 provides a ligand contact to ATP. A coiled-coil region spans residues L884–L953.

It belongs to the class-I aminoacyl-tRNA synthetase family. ValS type 1 subfamily. Monomer.

The protein resides in the cytoplasm. The catalysed reaction is tRNA(Val) + L-valine + ATP = L-valyl-tRNA(Val) + AMP + diphosphate. Functionally, catalyzes the attachment of valine to tRNA(Val). As ValRS can inadvertently accommodate and process structurally similar amino acids such as threonine, to avoid such errors, it has a 'posttransfer' editing activity that hydrolyzes mischarged Thr-tRNA(Val) in a tRNA-dependent manner. The polypeptide is Valine--tRNA ligase (Photobacterium profundum (strain SS9)).